A 185-amino-acid polypeptide reads, in one-letter code: ATP synthase subunit delta, chloroplastic (185 aa).

It belongs to the ATPase delta chain family. In terms of assembly, F-type ATPases have 2 components, F(1) - the catalytic core - and F(0) - the membrane proton channel. F(1) has five subunits: alpha(3), beta(3), gamma(1), delta(1), epsilon(1). CF(0) has four main subunits: a(1), b(1), b'(1) and c(10-14). The alpha and beta chains form an alternating ring which encloses part of the gamma chain. F(1) is attached to F(0) by a central stalk formed by the gamma and epsilon chains, while a peripheral stalk is formed by the delta, b and b' chains.

The protein localises to the plastid. It localises to the chloroplast thylakoid membrane. Its function is as follows. F(1)F(0) ATP synthase produces ATP from ADP in the presence of a proton or sodium gradient. F-type ATPases consist of two structural domains, F(1) containing the extramembraneous catalytic core and F(0) containing the membrane proton channel, linked together by a central stalk and a peripheral stalk. During catalysis, ATP synthesis in the catalytic domain of F(1) is coupled via a rotary mechanism of the central stalk subunits to proton translocation. Functionally, this protein is part of the stalk that links CF(0) to CF(1). It either transmits conformational changes from CF(0) to CF(1) or is implicated in proton conduction. The chain is ATP synthase subunit delta, chloroplastic from Guillardia theta (Cryptophyte).